The chain runs to 202 residues: Small ribosomal subunit protein uS4c (202 aa).

The 70-residue stretch at 90–159 (MRLDNIIFRL…TKNYEFSQTY (70 aa)) folds into the S4 RNA-binding domain.

This sequence belongs to the universal ribosomal protein uS4 family. Part of the 30S ribosomal subunit. Contacts protein S5. The interaction surface between S4 and S5 is involved in control of translational fidelity.

The protein localises to the plastid. The protein resides in the chloroplast. In terms of biological role, one of the primary rRNA binding proteins, it binds directly to 16S rRNA where it nucleates assembly of the body of the 30S subunit. Its function is as follows. With S5 and S12 plays an important role in translational accuracy. This Huperzia lucidula (Shining clubmoss) protein is Small ribosomal subunit protein uS4c (rps4).